Consider the following 973-residue polypeptide: Valine--tRNA ligase (973 aa).

The short motif at 57-67 (PNVTGSLHMGH) is the 'HIGH' region element. The 'KMSKS' region motif lies at 569 to 573 (KMSKS). Residue K572 participates in ATP binding. The stretch at 901–970 (MAGLIDKEAE…AKILEQKIQI (70 aa)) forms a coiled coil.

Belongs to the class-I aminoacyl-tRNA synthetase family. ValS type 1 subfamily. Monomer.

The protein localises to the cytoplasm. The catalysed reaction is tRNA(Val) + L-valine + ATP = L-valyl-tRNA(Val) + AMP + diphosphate. Functionally, catalyzes the attachment of valine to tRNA(Val). As ValRS can inadvertently accommodate and process structurally similar amino acids such as threonine, to avoid such errors, it has a 'posttransfer' editing activity that hydrolyzes mischarged Thr-tRNA(Val) in a tRNA-dependent manner. The polypeptide is Valine--tRNA ligase (Colwellia psychrerythraea (strain 34H / ATCC BAA-681) (Vibrio psychroerythus)).